Consider the following 355-residue polypeptide: 3-isopropylmalate dehydrogenase (355 aa).

Substrate-binding residues include arginine 90, arginine 100, arginine 128, and aspartate 222. Residues aspartate 222, aspartate 246, and aspartate 250 each coordinate Mg(2+). 280–292 (GSAPDIAGKGIAN) contacts NAD(+).

The protein belongs to the isocitrate and isopropylmalate dehydrogenases family. LeuB type 1 subfamily. In terms of assembly, homodimer. It depends on Mg(2+) as a cofactor. Mn(2+) serves as cofactor.

Its subcellular location is the cytoplasm. The catalysed reaction is (2R,3S)-3-isopropylmalate + NAD(+) = 4-methyl-2-oxopentanoate + CO2 + NADH. The protein operates within amino-acid biosynthesis; L-leucine biosynthesis; L-leucine from 3-methyl-2-oxobutanoate: step 3/4. In terms of biological role, catalyzes the oxidation of 3-carboxy-2-hydroxy-4-methylpentanoate (3-isopropylmalate) to 3-carboxy-4-methyl-2-oxopentanoate. The product decarboxylates to 4-methyl-2 oxopentanoate. This chain is 3-isopropylmalate dehydrogenase, found in Burkholderia lata (strain ATCC 17760 / DSM 23089 / LMG 22485 / NCIMB 9086 / R18194 / 383).